The following is a 138-amino-acid chain: Nucleoside diphosphate kinase (138 aa).

ATP is bound by residues lysine 9, phenylalanine 57, arginine 85, threonine 91, arginine 102, and asparagine 112. Residue histidine 115 is the Pros-phosphohistidine intermediate of the active site.

Belongs to the NDK family. As to quaternary structure, homotetramer. The cofactor is Mg(2+).

The protein localises to the cytoplasm. The enzyme catalyses a 2'-deoxyribonucleoside 5'-diphosphate + ATP = a 2'-deoxyribonucleoside 5'-triphosphate + ADP. It carries out the reaction a ribonucleoside 5'-diphosphate + ATP = a ribonucleoside 5'-triphosphate + ADP. Major role in the synthesis of nucleoside triphosphates other than ATP. The ATP gamma phosphate is transferred to the NDP beta phosphate via a ping-pong mechanism, using a phosphorylated active-site intermediate. The sequence is that of Nucleoside diphosphate kinase from Trichlorobacter lovleyi (strain ATCC BAA-1151 / DSM 17278 / SZ) (Geobacter lovleyi).